The primary structure comprises 515 residues: N-acetylglucosamine-1-phosphodiester alpha-N-acetylglucosaminidase (515 aa).

An N-terminal signal peptide occupies residues 1–25; that stretch reads MATSTGRWLLLRLALFGFLWEASGG. Residues 26–49 constitute a propeptide, removed in mature form; sequence LDSGASRDDDLLLPYPRARARLPR. Over 50–448 the chain is Lumenal; the sequence is DCTRVRAGNR…AGELSFFTRT (399 aa). Disulfide bonds link Cys115/Cys148, Cys132/Cys323, Cys307/Cys314, Cys362/Cys373, and Cys380/Cys389. 3 N-linked (GlcNAc...) asparagine glycosylation sites follow: Asn208, Asn214, and Asn296. The EGF-like domain occupies 358 to 390; the sequence is DELDCGPSNCSQHGLCTETGCRCDAGWTGSNCS. 3 N-linked (GlcNAc...) asparagine glycosylation sites follow: Asn366, Asn388, and Asn420. A helical transmembrane segment spans residues 449-469; that stretch reads AWLALTLALAFLLLISTAANL. Topologically, residues 470–515 are cytoplasmic; sequence SLLLSRAERNRRLHGDYAYHPLQEMNGEPLAAEKEQPGGAHNPFKD. The interval 486–493 is mediates the interaction with AP4M1; the sequence is YAYHPLQE. Positions 488–491 match the Tyrosine-based internalization motif motif; it reads YHPL. The short motif at 511–515 is the NPF internalization motif element; the sequence is NPFKD.

As to quaternary structure, homotetramer arranged as two disulfide-linked homodimers. Interacts with AP4M1. The precursor is cleaved and activated in the trans-Golgi network by a furin endopeptidase. As to expression, isoform 2 may be brain-specific.

The protein localises to the golgi apparatus. The protein resides in the golgi stack membrane. It localises to the trans-Golgi network. It catalyses the reaction N(4)-[6-(N-acetyl-alpha-D-glucosaminyl-1-phospho)-alpha-D-mannosyl-(1-&gt;2)-alpha-D-mannosyl-(glycan)]-L-asparaginyl-[protein] + H2O = N(4)-[6-phospho-alpha-D-mannosyl-(1-&gt;2)-alpha-D-mannosyl-(glycan)]-L-asparaginyl-[protein] + N-acetyl-D-glucosamine + H(+). It participates in protein modification; protein glycosylation. Functionally, catalyzes the second step in the formation of the mannose 6-phosphate targeting signal on lysosomal enzyme oligosaccharides by removing GlcNAc residues from GlcNAc-alpha-P-mannose moieties, which are formed in the first step. Also hydrolyzes UDP-GlcNAc, a sugar donor for Golgi N-acetylglucosaminyltransferases. The sequence is that of N-acetylglucosamine-1-phosphodiester alpha-N-acetylglucosaminidase (NAGPA) from Homo sapiens (Human).